Here is a 303-residue protein sequence, read N- to C-terminus: Pycsar effector protein BcPycTIR (303 aa).

A nucleoside 3',5'-cyclic phosphate is bound at residue 22–138; it reads KLVGGDKGLA…RRMAKELSKR (117 aa). The TIR-like stretch occupies residues 154–273; the sequence is RVFVISSAEA…DMAGVTTIPY (120 aa).

Purified protein forms large 2-dimensional sheets when incubated with cUMP and shorter filaments in the presence of cCMP.

It localises to the cytoplasm. The catalysed reaction is NAD(+) + H2O = ADP-D-ribose + nicotinamide + H(+). With respect to regulation, activated by cyclic UMP (cUMP) and to a lesser extent by cCMP. Functionally, pycsar (pyrimidine cyclase system for antiphage resistance) provides immunity against bacteriophage. The pyrimidine cyclase (PycC) synthesizes cyclic nucleotides in response to infection; these serve as specific second messenger signals. The signals activate the adjacent effector, leading to bacterial cell death and abortive phage infection. A clade B Pycsar system. In terms of biological role, the effector protein of a two-gene Pycsar system. Upon activation by cyclic UMP (cUMP) degrades cellular NAD(+). Expression of this and adjacent uridylate cyclase BcPycC (AC A0A0J5ZXG5) probably confers resistance to bacteriophage. The genes are probably only expressed in response to bacteriophage infection. This protein probably only responds to cUMP (produced by its cognate NTP cyclase). The polypeptide is Pycsar effector protein BcPycTIR (Burkholderia cepacia (Pseudomonas cepacia)).